A 198-amino-acid polypeptide reads, in one-letter code: Interferon gamma (198 aa).

The first 23 residues, 1-23 (MMVSTARAVVCLSLCLCVCQVRG), serve as a signal peptide directing secretion. N-linked (GlcNAc...) asparagine glycans are attached at residues asparagine 31, asparagine 42, and asparagine 174. The segment at 173 to 198 (SNNTKMQRRRRRRRRQARKVKTPTRA) is disordered. A compositionally biased stretch (basic residues) spans 178-198 (MQRRRRRRRRQARKVKTPTRA).

It belongs to the type II (or gamma) interferon family. Homodimer.

It localises to the secreted. In terms of biological role, cytokine which binds to interferon gamma receptor 1 (ifngr1). Also binds with lower affinity to interferon gamma receptor 1-like (ifngr1l). Has activating effects on macrophages and neutrophils. This chain is Interferon gamma, found in Paralichthys olivaceus (Bastard halibut).